Reading from the N-terminus, the 571-residue chain is Methionine--tRNA ligase (571 aa).

A 'HIGH' region motif is present at residues 10 to 20 (PYVNAVPHLGN). Residues cysteine 143, cysteine 146, cysteine 156, and cysteine 159 each coordinate Zn(2+). A 'KMSKS' region motif is present at residues 333–337 (KFSKS). Residue lysine 336 coordinates ATP.

This sequence belongs to the class-I aminoacyl-tRNA synthetase family. MetG type 1 subfamily. Requires Zn(2+) as cofactor.

It localises to the cytoplasm. The enzyme catalyses tRNA(Met) + L-methionine + ATP = L-methionyl-tRNA(Met) + AMP + diphosphate. In terms of biological role, is required not only for elongation of protein synthesis but also for the initiation of all mRNA translation through initiator tRNA(fMet) aminoacylation. The sequence is that of Methionine--tRNA ligase from Sulfolobus acidocaldarius (strain ATCC 33909 / DSM 639 / JCM 8929 / NBRC 15157 / NCIMB 11770).